Reading from the N-terminus, the 1746-residue chain is Tenascin (1746 aa).

Positions 1-22 are cleaved as a signal peptide; that stretch reads MGVVTRLLVGTFLASLALPAQG. Residues 23 to 185 are involved in hexamer formation; the sequence is GVLKKVIRHK…CEPGWKGPNC (163 aa). N-linked (GlcNAc...) asparagine glycosylation occurs at N38. A phosphoserine mark is found at S65, S70, and S72. The O-linked (Xyl...) (chondroitin sulfate) serine glycan is linked to S72. The stretch at 118–145 forms a coiled coil; sequence DVKELLSRLEELENLVSSLREQCTSGAG. N-linked (GlcNAc...) asparagine glycosylation is found at N166 and N184. The 13-residue stretch at 174-186 folds into the EGF-like 1; incomplete domain; that stretch reads CVCEPGWKGPNCS. 14 consecutive EGF-like domains span residues 187–217, 218–249, 250–280, 281–311, 312–342, 343–373, 374–404, 405–435, 436–466, 467–497, 498–528, 529–559, 560–589, and 590–620; these read EPEC…EDCS, QLAC…DCSR, ETCP…EDCN, EPLC…EDCG, ELIC…EDCG, RLAC…ADCS, ERRC…EDCG, ELRC…EDCS, QLRC…YDCS, EMSC…EDCR, ELRC…PDCA, DLAC…KDCG, QRRC…GLDC, and GQRS…GEDC. Cystine bridges form between C190/C200, C194/C205, C207/C216, C221/C231, C225/C236, C238/C247, C252/C263, C256/C268, C270/C279, C284/C294, C288/C299, C301/C310, C315/C325, C319/C330, C332/C341, C346/C356, C350/C361, C363/C372, C377/C387, C381/C392, C394/C403, C408/C418, C412/C423, C425/C434, C439/C449, C443/C454, C456/C465, C470/C480, C474/C485, C487/C496, C501/C511, C505/C516, C518/C527, C532/C542, C536/C547, C549/C558, C563/C573, C567/C578, C580/C589, C594/C604, C598/C609, and C611/C620. N327 carries an N-linked (GlcNAc...) asparagine glycan. Fibronectin type-III domains follow at residues 625–717, 718–801, 805–894, 895–988, 989–1075, 1076–1166, 1167–1256, 1257–1346, 1347–1433, and 1434–1522; these read PPKD…TPEG, LKFK…VTTT, APSQ…TGLD, APRN…LDPP, KDFR…AGEP, EIGN…EAEP, EVDN…TAMG, SPKE…ALDG, PSGL…TDLD, and SPRD…IGLL. An N-linked (GlcNAc...) asparagine glycan is attached at N788. At T905 the chain carries Phosphothreonine. N-linked (GlcNAc...) asparagine glycans are attached at residues N1034, N1079, and N1121. N1354 carries N-linked (GlcNAc...) asparagine glycosylation. The Fibrinogen C-terminal domain maps to 1520–1735; that stretch reads GLLYPFPRDC…FAEMKLRPSN (216 aa).

It belongs to the tenascin family. As to quaternary structure, homohexamer; disulfide-linked. A homotrimer may be formed in the triple coiled-coil region and may be stabilized by disulfide rings at both ends. Two of such half-hexabrachions may be disulfide linked within the central globule. Interacts with CSPG4. Interacts (via the 3rd fibronectin type-III domain) with integrin ITGA9:ITGB1. As to expression, submaxillary glands and brain.

The protein resides in the secreted. It is found in the extracellular space. Its subcellular location is the extracellular matrix. Functionally, extracellular matrix protein implicated in guidance of migrating neurons as well as axons during development, synaptic plasticity as well as neuronal regeneration. Promotes neurite outgrowth from cortical neurons grown on a monolayer of astrocytes. Ligand for integrins alpha-8/beta-1, alpha-9/beta-1, alpha-V/beta-3 and alpha-V/beta-6. In tumors, stimulates angiogenesis by elongation, migration and sprouting of endothelial cells. This is Tenascin (TNC) from Sus scrofa (Pig).